Reading from the N-terminus, the 270-residue chain is Methylthioribulose-1-phosphate dehydratase (270 aa).

Cys122 contacts substrate. 2 residues coordinate Zn(2+): His140 and His142. Residue Glu165 is the Proton donor/acceptor of the active site. His230 is a Zn(2+) binding site.

Belongs to the aldolase class II family. MtnB subfamily. It depends on Zn(2+) as a cofactor.

The protein resides in the cytoplasm. The enzyme catalyses 5-(methylsulfanyl)-D-ribulose 1-phosphate = 5-methylsulfanyl-2,3-dioxopentyl phosphate + H2O. Its pathway is amino-acid biosynthesis; L-methionine biosynthesis via salvage pathway; L-methionine from S-methyl-5-thio-alpha-D-ribose 1-phosphate: step 2/6. Its function is as follows. Catalyzes the dehydration of methylthioribulose-1-phosphate (MTRu-1-P) into 2,3-diketo-5-methylthiopentyl-1-phosphate (DK-MTP-1-P). In Candida albicans (strain WO-1) (Yeast), this protein is Methylthioribulose-1-phosphate dehydratase.